Reading from the N-terminus, the 64-residue chain is Large ribosomal subunit protein bL32 (64 aa).

A disordered region spans residues 1–28 (MAVQKSRVTPSRRGQRRSHDALTAKKLS).

Belongs to the bacterial ribosomal protein bL32 family.

The protein is Large ribosomal subunit protein bL32 (rpmF) of Xylella fastidiosa (strain 9a5c).